Reading from the N-terminus, the 189-residue chain is Large ribosomal subunit protein uL5c (189 aa).

It belongs to the universal ribosomal protein uL5 family. As to quaternary structure, part of the 50S ribosomal subunit; contacts the 5S rRNA.

The protein resides in the plastid. Its subcellular location is the chloroplast. Functionally, binds 5S rRNA, forms part of the central protuberance of the 50S subunit. The sequence is that of Large ribosomal subunit protein uL5c (rpl5) from Chara vulgaris (Common stonewort).